We begin with the raw amino-acid sequence, 361 residues long: DNA replication and repair protein RecF (361 aa).

30-37 (GPNGSGKT) is an ATP binding site.

Belongs to the RecF family.

Its subcellular location is the cytoplasm. In terms of biological role, the RecF protein is involved in DNA metabolism; it is required for DNA replication and normal SOS inducibility. RecF binds preferentially to single-stranded, linear DNA. It also seems to bind ATP. This Yersinia pestis protein is DNA replication and repair protein RecF.